Here is a 329-residue protein sequence, read N- to C-terminus: GTP 3',8-cyclase (329 aa).

A Radical SAM core domain is found at 8–234 (AFARKFYYLR…QLRQRSDGPA (227 aa)). A GTP-binding site is contributed by Arg17. 2 residues coordinate [4Fe-4S] cluster: Cys24 and Cys28. Tyr30 provides a ligand contact to S-adenosyl-L-methionine. Cys31 is a [4Fe-4S] cluster binding site. Arg68 is a binding site for GTP. Gly72 provides a ligand contact to S-adenosyl-L-methionine. Position 99 (Thr99) interacts with GTP. Residue Ser123 coordinates S-adenosyl-L-methionine. Residue Lys160 coordinates GTP. Residue Met194 participates in S-adenosyl-L-methionine binding. [4Fe-4S] cluster-binding residues include Cys257 and Cys260. GTP is bound at residue 262 to 264 (RLR). Position 274 (Cys274) interacts with [4Fe-4S] cluster.

This sequence belongs to the radical SAM superfamily. MoaA family. As to quaternary structure, monomer and homodimer. [4Fe-4S] cluster serves as cofactor.

The enzyme catalyses GTP + AH2 + S-adenosyl-L-methionine = (8S)-3',8-cyclo-7,8-dihydroguanosine 5'-triphosphate + 5'-deoxyadenosine + L-methionine + A + H(+). It participates in cofactor biosynthesis; molybdopterin biosynthesis. In terms of biological role, catalyzes the cyclization of GTP to (8S)-3',8-cyclo-7,8-dihydroguanosine 5'-triphosphate. This chain is GTP 3',8-cyclase, found in Escherichia coli (strain K12 / MC4100 / BW2952).